A 275-amino-acid chain; its full sequence is Ribosomal RNA small subunit methyltransferase A (275 aa).

Asparagine 19, leucine 21, glycine 46, glutamate 71, aspartate 94, and asparagine 117 together coordinate S-adenosyl-L-methionine.

It belongs to the class I-like SAM-binding methyltransferase superfamily. rRNA adenine N(6)-methyltransferase family. RsmA subfamily.

It is found in the cytoplasm. It carries out the reaction adenosine(1518)/adenosine(1519) in 16S rRNA + 4 S-adenosyl-L-methionine = N(6)-dimethyladenosine(1518)/N(6)-dimethyladenosine(1519) in 16S rRNA + 4 S-adenosyl-L-homocysteine + 4 H(+). Specifically dimethylates two adjacent adenosines (A1518 and A1519) in the loop of a conserved hairpin near the 3'-end of 16S rRNA in the 30S particle. May play a critical role in biogenesis of 30S subunits. This Burkholderia pseudomallei (strain 668) protein is Ribosomal RNA small subunit methyltransferase A.